The primary structure comprises 254 residues: MLTITKRLVTTDVRSRILLSSLNGKMSDALALLRQQQQTSVDVELLHTMLARAAALAHADTIAYMWYQHVMPRRLPVEGRLLCEMAGVALYQDRLFLPAQFLQHYQAMNRDRRTSPEDELIEYELRRIKVEAFARGTMHSTALREKWKVFLQEMDTLPGQPPLRLRDFPQMTKAMGIALMQQDEQAAALALFGRQPLVIKNEWSLPLLLAGVLWHVPGPAQARRVLAEFRQSYRGLPLLDAELVIKRRGFEINT.

A mitochondrion-targeting transit peptide spans 1 to 8 (MLTITKRL). The segment at 185–254 (QAAALALFGR…IKRRGFEINT (70 aa)) is essential for PET122 function.

The protein resides in the mitochondrion inner membrane. In terms of biological role, required for expression of the mitochondrial gene for cytochrome c oxidase subunit 3 (COX3). PET122 seems to work by directly interacting with the small ribosomal subunit to promote translation initiation on the COX3 mRNA. The sequence is that of Protein PET122, mitochondrial (PET122) from Saccharomyces cerevisiae (strain ATCC 204508 / S288c) (Baker's yeast).